We begin with the raw amino-acid sequence, 455 residues long: Alcohol acyl transferase 1 allele GSb (455 aa).

Residues histidine 164 and asparagine 385 each act as proton acceptor in the active site.

It belongs to the plant acyltransferase family. In terms of tissue distribution, expressed at very low levels in the skin of ripe fruit.

Its function is as follows. Involved in the biosynthesis of volatile esters which confer ripe apple fruit flavor. Alcohol acyl transferase that can use a wide range of alcohols as substrate to produce esters. The polypeptide is Alcohol acyl transferase 1 allele GSb (Malus domestica (Apple)).